A 71-amino-acid chain; its full sequence is Small ribosomal subunit protein bS21 (71 aa).

The protein belongs to the bacterial ribosomal protein bS21 family.

This chain is Small ribosomal subunit protein bS21, found in Acinetobacter baylyi (strain ATCC 33305 / BD413 / ADP1).